The chain runs to 530 residues: Light-harvesting complex I LH38 proteins (530 aa).

It localises to the plastid. The protein resides in the chloroplast. The polypeptide is Light-harvesting complex I LH38 proteins (Euglena gracilis).